The primary structure comprises 55 residues: Large ribosomal subunit protein bL33 (55 aa).

The protein belongs to the bacterial ribosomal protein bL33 family.

The protein is Large ribosomal subunit protein bL33 of Mycobacterium leprae (strain Br4923).